Consider the following 159-residue polypeptide: Cytochrome P450 monooxygenase aunB (159 aa).

A heme-binding site is contributed by C134.

It belongs to the cytochrome P450 family. Heme is required as a cofactor.

It carries out the reaction 2 fonsecin B + NADPH + O2 + H(+) = aurasperone B + NADP(+) + 2 H2O. The catalysed reaction is 2 rubrofusarin B + NADPH + O2 + H(+) = aurasperone A + NADP(+) + 2 H2O. It participates in secondary metabolite biosynthesis. Its function is as follows. Cytochrome P450 monooxygenase; part of the gene cluster that mediates the biosynthesis of aurasperone B, a dimeric gamma-naphthopyrone. The first step in the biosynthesis of aurasperone B is the production of gamma-naphthopyrone precursor YWA1 by the non-reducing polyketide synthase albA, via condensation of one acetyl-CoA starter unit with 6 malonyl-CoA units. YWA1 is then methylated by aunE at position C-6 to yield foncesin which is further methylated at position C-8 by aunD to produce fonsecin B. A key enzyme in the biosynthetic pathway is the cytochrome P450 monooxygenase aunB which catalyzes the oxidative dimerization of fonsecin B to aurasperone B. AunB also catalyzes the oxidative dimerization of rubrofusarin B into aurasperone A. This is Cytochrome P450 monooxygenase aunB from Aspergillus niger (strain ATCC 1015 / CBS 113.46 / FGSC A1144 / LSHB Ac4 / NCTC 3858a / NRRL 328 / USDA 3528.7).